Here is a 64-residue protein sequence, read N- to C-terminus: Disintegrin VA6 (64 aa).

The region spanning 1–64 (NSANPCCDPV…SDCPRNPYKS (64 aa)) is the Disintegrin domain. Disulfide bonds link Cys6-Cys29, Cys20-Cys26, Cys25-Cys50, and Cys38-Cys57. Positions 42–44 (RGD) match the Cell attachment site motif.

The protein belongs to the venom metalloproteinase (M12B) family. P-II subfamily. P-IId sub-subfamily. Homodimer; disulfide-linked. As to expression, expressed by the venom gland.

Its subcellular location is the secreted. Poor inhibitor of platelet aggregation. The disintegrin inhibits the adhesion of cells expressing the RGD-dependent integrin alpha-5/beta-1 (ITGA5/ITGB1) to immobilized fibronectin. Inhibition on alpha-IIb/beta-3 (ITGA2B/ITGB3) is low, and there is no inhibition on alpha-1/beta-1 (ITGA1/ITGB1), alpha-2/beta-1 (ITGA2/ITGB1) and alpha-6/beta-1 (ITGA6/ITGB1). The protein is Disintegrin VA6 of Vipera ammodytes ammodytes (Western sand viper).